The sequence spans 645 residues: UPF0313 protein CLK_3381 (645 aa).

One can recognise a Radical SAM core domain in the interval 295–566 (AIKEVKFSIT…RMQRALLQFS (272 aa)). [4Fe-4S] cluster contacts are provided by C309, C313, and C316. Residues 598–645 (NKPYKKSHKKNNVKNNNNHYNKNNNYNKNKDVSKKNKKNSLSKHKKRK) form a disordered region. The span at 600-609 (PYKKSHKKNN) shows a compositional bias: basic residues. Residues 610 to 624 (VKNNNNHYNKNNNYN) are compositionally biased toward low complexity. Residues 632 to 645 (KNKKNSLSKHKKRK) show a composition bias toward basic residues.

It belongs to the UPF0313 family. Requires [4Fe-4S] cluster as cofactor.

In Clostridium botulinum (strain Loch Maree / Type A3), this protein is UPF0313 protein CLK_3381.